A 131-amino-acid polypeptide reads, in one-letter code: Small ribosomal subunit protein bS16 (131 aa).

Over residues 87–117 (IGKSKQEELRKSEAKTSAKNKKANEEKANEE) the composition is skewed to basic and acidic residues. Residues 87 to 131 (IGKSKQEELRKSEAKTSAKNKKANEEKANEEKVEESETLEASSEA) are disordered.

It belongs to the bacterial ribosomal protein bS16 family.

This Prochlorococcus marinus (strain SARG / CCMP1375 / SS120) protein is Small ribosomal subunit protein bS16.